A 222-amino-acid polypeptide reads, in one-letter code: Probable mitochondrial import inner membrane translocase subunit Tim17 3 (222 aa).

The next 3 helical transmembrane spans lie at 16–36, 60–80, and 115–135; these read CGCAFMMGTIGGSLFEFLKGF, SIAGSFAVWGATFSTVDCALV, and ALVGCLVLAMIEGAGAAVATI.

This sequence belongs to the Tim17/Tim22/Tim23 family. In terms of assembly, component of the TIM23 complex at least composed of Tim23, Tim17 (Tim17a1, Tim17a2 or Tim17b1) and a Tim50. The complex interacts with the Tim44 component of the PAM complex.

It is found in the mitochondrion inner membrane. Essential component of the TIM23 complex, a complex that mediates the translocation of transit peptide-containing proteins across the mitochondrial inner membrane. This chain is Probable mitochondrial import inner membrane translocase subunit Tim17 3 (Tim17a1), found in Drosophila melanogaster (Fruit fly).